We begin with the raw amino-acid sequence, 550 residues long: Kinase suppressor of Ras B (550 aa).

Composition is skewed to low complexity over residues 21–56 and 63–75; these read SFSS…SNPI and ATSS…STSS. The disordered stretch occupies residues 21-87; that stretch reads SFSSWRRSST…PPPASAPPRI (67 aa). A Phorbol-ester/DAG-type zinc finger spans residues 90–145; that stretch reads YHKMVPSKSKFRQCDVCEHIFIFDFVRKQHLDDVYACNVCGIRVHKGCLDRVKNDC. The tract at residues 172 to 196 is disordered; that stretch reads TTASISKSLTTSPTCSTSTTMSPAG. Residues 177-193 are compositionally biased toward low complexity; that stretch reads SKSLTTSPTCSTSTTMS. In terms of domain architecture, Protein kinase spans 248–528; sequence VDVMTKIGDG…FQQIVKRITV (281 aa). A disordered region spans residues 530–550; the sequence is MPRKESNKQKRRSTAHENPLF.

Belongs to the protein kinase superfamily. TKL Ser/Thr protein kinase family. In terms of assembly, interacts with ndk-1.

In terms of biological role, probable inactive protein kinase which positively regulates Ras-mediated signaling probably acting at the level of let-60/ras or/and lin-45/raf. In the germline, regulates meiotic progression during oogenesis and mpk-1 (isoform b) phosphorylation. Plays a role in meiotic recombination events. Functions redundantly with ksr-1 in the Ras-mediated regulation of larval survival, the development of excretory canal, in determining vulval precursor cell fate during vulval induction and in mpk-1 phosphorylation in somatic cells. The chain is Kinase suppressor of Ras B from Caenorhabditis elegans.